Here is an 840-residue protein sequence, read N- to C-terminus: Phosphatidylglycerol lysyltransferase (840 aa).

At 1–8 the chain is on the cytoplasmic side; sequence MNQEVKNK. The helical transmembrane segment at 9–29 threads the bilayer; it reads IFSILKITFATALFIFVAITL. The Extracellular portion of the chain corresponds to 30–52; that stretch reads YRELSGINFKDTLVEFSKINRMS. The helical transmembrane segment at 53-73 threads the bilayer; the sequence is LVLLFIGGGASLVILSMYDVI. The Cytoplasmic segment spans residues 74–89; sequence LSRALKMDISLGKVLR. The helical transmembrane segment at 90-110 threads the bilayer; that stretch reads VSYIINALNAIVGFGGFIGAG. The Extracellular portion of the chain corresponds to 111–128; that stretch reads VRAMVYKNYTHDKKKLVH. Residues 129–149 form a helical membrane-spanning segment; it reads FISLILISMLTGLSLLSLLIV. Residues 150–161 lie on the Cytoplasmic side of the membrane; that stretch reads FHVFDASLILDK. The chain crosses the membrane as a helical span at residues 162-182; the sequence is ITWVRWVLYVVSFFLPLFIIY. The Extracellular segment spans residues 183-200; that stretch reads SMVRPPDKNNRFVGLYCT. A helical transmembrane segment spans residues 201–221; the sequence is LVSCVEWLAAAVVLYFCGVIV. Over 222–229 the chain is Cytoplasmic; it reads DAHVSFMS. Residues 230 to 250 form a helical membrane-spanning segment; sequence FIAIFIIAALSGLVSFIPGGF. The Extracellular portion of the chain corresponds to 251–271; that stretch reads GAFDLVVLLGFKTLGVPEEKV. The helical transmembrane segment at 272 to 292 threads the bilayer; sequence LLMLLLYRFAYYFVPVIIALI. Residues 293 to 337 lie on the Cytoplasmic side of the membrane; the sequence is LSSFEFGTSAKKYIEGSKYFIPAKDVTSFLMSYQKDIIAKIPSLS. Residues 338–358 form a helical membrane-spanning segment; it reads LAILVFFTSMIFFVNNLTIVY. Over 359–369 the chain is Extracellular; it reads DALYDGNHLTY. The chain crosses the membrane as a helical span at residues 370-390; the sequence is YILLAIHTSACLLLLLNVVGI. Residues 391-394 are Cytoplasmic-facing; that stretch reads YKQS. Helical transmembrane passes span 395–415 and 416–436; these read RRAI…TFFT and YASY…IVAF. The Cytoplasmic portion of the chain corresponds to 437–450; it reads RRARRLKRPVRMRN. Residues 451–471 form a helical membrane-spanning segment; sequence IVAMLLFSLFILYVNHIFIAG. The Extracellular segment spans residues 472–489; that stretch reads TLYALDIYTIEMHTSVLR. The helical transmembrane segment at 490–510 threads the bilayer; it reads YYFWLTILIIAIIIGMIAWLF. Topologically, residues 511 to 840 are cytoplasmic; sequence DYQFSKVRIS…SKVMRVIRHK (330 aa).

The protein belongs to the LPG synthase family.

It is found in the cell membrane. It catalyses the reaction L-lysyl-tRNA(Lys) + a 1,2-diacyl-sn-glycero-3-phospho-(1'-sn-glycerol) = a 1,2-diacyl-sn-glycero-3-phospho-1'-(3'-O-L-lysyl)-sn-glycerol + tRNA(Lys). In terms of biological role, catalyzes the transfer of a lysyl group from L-lysyl-tRNA(Lys) to membrane-bound phosphatidylglycerol (PG), which produces lysylphosphatidylglycerol (LPG), a major component of the bacterial membrane with a positive net charge. LPG synthesis contributes to bacterial virulence as it is involved in the resistance mechanism against cationic antimicrobial peptides (CAMP) produces by the host's immune system (defensins, cathelicidins) and by the competing microorganisms (bacteriocins). In fact, the modification of anionic phosphatidylglycerol with positively charged L-lysine results in repulsion of the peptides. In Staphylococcus aureus (strain COL), this protein is Phosphatidylglycerol lysyltransferase (mprF).